We begin with the raw amino-acid sequence, 316 residues long: Serpentine receptor class delta-48 (316 aa).

Transmembrane regions (helical) follow at residues 8 to 28 (FFYI…IFVI), 42 to 62 (FLLC…LLQL), 89 to 109 (LFYV…FITI), 127 to 147 (VVII…QIDL), 185 to 205 (FLLT…GFFI), 236 to 256 (TLQS…YFVV), and 269 to 289 (ILPV…LYSV).

It belongs to the nematode receptor-like protein srd family.

Its subcellular location is the membrane. The polypeptide is Serpentine receptor class delta-48 (srd-48) (Caenorhabditis elegans).